The chain runs to 552 residues: MAGUK p55 subfamily member 2 (552 aa).

L27 domains lie at 8 to 59 and 60 to 118; these read SESA…EETK and LEAV…YETP. Position 42 is a phosphoserine (S42). T117 bears the Phosphothreonine mark. Phosphoserine is present on S121. In terms of domain architecture, PDZ spans 140-219; that stretch reads MVGIRKTAGE…SVILKILPSY (80 aa). The region spanning 225 to 293 is the SH3 domain; the sequence is PRQVFVKCHF…PSQLLEEKRK (69 aa). A Guanylate kinase-like domain is found at 350–537; sequence RKTLVLIGAQ…TFRELQTAME (188 aa).

The protein belongs to the MAGUK family. As to quaternary structure, can homomultimerise. Interacts with CACNG2. Interacts (via the SH3-Guanylate kinase-like sub-module) with DLG4/PSD95 and DLGAP1/GKAP. Interacts (via the PDZ domain) with CADM1 (via C-terminus). Interacts with KCNN2/SK2 (via N-terminal domain). Interacts with SRC. In terms of processing, phosphorylated by SRC. As to expression, expressed in pyramidal neurons of CA1 region of the hippocampus.

It is found in the cell projection. The protein resides in the dendrite. Its subcellular location is the postsynaptic density. The protein localises to the cytoplasm. It localises to the cytoskeleton. It is found in the membrane. Its function is as follows. Postsynaptic MAGUK scaffold protein that links CADM1 cell adhesion molecules to core components of the postsynaptic density. In CA1 pyramidal neurons, required for synaptic KCNN2-containing channel function and long-term potentiation expression. Seems to negatively regulate SRC function in epithelial cells. The sequence is that of MAGUK p55 subfamily member 2 from Mus musculus (Mouse).